The following is a 620-amino-acid chain: UvrABC system protein C (620 aa).

Residues 13–92 (DKPGVYIMKN…IKKYSPRYNI (80 aa)) enclose the GIY-YIG domain. Residues 204-239 (TSIIKNLKLEMEKAAEELEFEKAAKIRDRILAIELI) enclose the UVR domain.

It belongs to the UvrC family. As to quaternary structure, interacts with UvrB in an incision complex.

It localises to the cytoplasm. Its function is as follows. The UvrABC repair system catalyzes the recognition and processing of DNA lesions. UvrC both incises the 5' and 3' sides of the lesion. The N-terminal half is responsible for the 3' incision and the C-terminal half is responsible for the 5' incision. This chain is UvrABC system protein C, found in Clostridium perfringens (strain SM101 / Type A).